Here is a 175-residue protein sequence, read N- to C-terminus: ATP synthase subunit b, chloroplastic (175 aa).

A helical membrane pass occupies residues 21–40 (LLESNVINIIILISLLIYLG).

The protein belongs to the ATPase B chain family. As to quaternary structure, F-type ATPases have 2 components, F(1) - the catalytic core - and F(0) - the membrane proton channel. F(1) has five subunits: alpha(3), beta(3), gamma(1), delta(1), epsilon(1). F(0) has four main subunits: a(1), b(1), b'(1) and c(10-14). The alpha and beta chains form an alternating ring which encloses part of the gamma chain. F(1) is attached to F(0) by a central stalk formed by the gamma and epsilon chains, while a peripheral stalk is formed by the delta, b and b' chains.

Its subcellular location is the plastid. It localises to the chloroplast thylakoid membrane. Functionally, f(1)F(0) ATP synthase produces ATP from ADP in the presence of a proton or sodium gradient. F-type ATPases consist of two structural domains, F(1) containing the extramembraneous catalytic core and F(0) containing the membrane proton channel, linked together by a central stalk and a peripheral stalk. During catalysis, ATP synthesis in the catalytic domain of F(1) is coupled via a rotary mechanism of the central stalk subunits to proton translocation. In terms of biological role, component of the F(0) channel, it forms part of the peripheral stalk, linking F(1) to F(0). In Cyanidium caldarium (Red alga), this protein is ATP synthase subunit b, chloroplastic.